The following is a 362-amino-acid chain: Peptide chain release factor 1 (362 aa).

Gln-232 carries the N5-methylglutamine modification.

It belongs to the prokaryotic/mitochondrial release factor family. Post-translationally, methylated by PrmC. Methylation increases the termination efficiency of RF1.

It is found in the cytoplasm. In terms of biological role, peptide chain release factor 1 directs the termination of translation in response to the peptide chain termination codons UAG and UAA. The protein is Peptide chain release factor 1 of Myxococcus xanthus.